We begin with the raw amino-acid sequence, 258 residues long: Global transcriptional regulator CodY (258 aa).

The segment at 1-156 is GAF domain; sequence MSSLLSKTRR…SATIVGMEML (156 aa). The segment at residues 204-223 is a DNA-binding region (H-T-H motif); the sequence is ASKIADKVGITRSVIVNALR.

Belongs to the CodY family.

The protein localises to the cytoplasm. In terms of biological role, DNA-binding global transcriptional regulator which is involved in the adaptive response to starvation and acts by directly or indirectly controlling the expression of numerous genes in response to nutrient availability. During rapid exponential growth, CodY is highly active and represses genes whose products allow adaptation to nutrient depletion. The polypeptide is Global transcriptional regulator CodY (Clostridium botulinum (strain Alaska E43 / Type E3)).